The primary structure comprises 243 residues: Uridylate kinase (243 aa).

12 to 15 is an ATP binding site; that stretch reads KLSG. An involved in allosteric activation by GTP region spans residues 20–25; it reads GAKGFG. G55 and R59 together coordinate ATP. UMP contacts are provided by residues D74 and 135–142; that span reads TGNPYFTT. ATP-binding residues include Q163, Y169, and D172.

It belongs to the UMP kinase family. As to quaternary structure, homohexamer.

The protein resides in the cytoplasm. It catalyses the reaction UMP + ATP = UDP + ADP. The protein operates within pyrimidine metabolism; CTP biosynthesis via de novo pathway; UDP from UMP (UMPK route): step 1/1. Its activity is regulated as follows. Allosterically activated by GTP. Inhibited by UTP. In terms of biological role, catalyzes the reversible phosphorylation of UMP to UDP. In Symbiobacterium thermophilum (strain DSM 24528 / JCM 14929 / IAM 14863 / T), this protein is Uridylate kinase.